Consider the following 496-residue polypeptide: Transmembrane protein 104 (496 aa).

Over 1-10 (MAGEITETGE) the chain is Cytoplasmic. A helical transmembrane segment spans residues 11 to 31 (LYSPYVGLVYMFNLIVGTGAL). Over 32–36 (TMPKA) the chain is Extracellular. A helical membrane pass occupies residues 37–57 (FATAGWLVSLVLLVFVGFMSF). Topologically, residues 58-146 (VTTTFAMEAM…SMFFNKVGVN (89 aa)) are cytoplasmic. Positions 81–100 (THKEEDDEDSSTASDSDLLS) are disordered. Over residues 91-100 (STASDSDLLS) the composition is skewed to low complexity. Residues 147 to 167 (LFYFCIITYLYGDLAIYAAAV) form a helical membrane-spanning segment. The Extracellular portion of the chain corresponds to 168 to 204 (PVSLMQVTCSVSGNDSCGVDTDARYNDTDLCWGPLRR). N-linked (GlcNAc...) asparagine glycosylation is present at asparagine 193. The helical transmembrane segment at 205–225 (VDVYRIYLAIFTVLLGPFTFF) threads the bilayer. The Cytoplasmic portion of the chain corresponds to 226 to 233 (DVQKTKYL). Residues 234-254 (QILTSMMRWIAFAIMIVLALV) form a helical membrane-spanning segment. Over 255-265 (RIGKGQGEGHP) the chain is Extracellular. A helical transmembrane segment spans residues 266-286 (PLANFLGVQNLFGVCVYSFMC). The Cytoplasmic portion of the chain corresponds to 287 to 306 (QHSLPSLITPISSKRHITRL). The chain crosses the membrane as a helical span at residues 307-327 (LFLDYALILAFYGLLSFTAIF). Residues 328-354 (CFRGDSLMDMYTLNFARCDVVGLAAVR) are Extracellular-facing. The helical transmembrane segment at 355–375 (FFLGLFPVFTISTNFPIIAVT) threads the bilayer. Topologically, residues 376–397 (LRNNWKTLFHREGGTYPWVVDR) are cytoplasmic. Residues 398–418 (VVFPTITLVPPILVAFCTHDL) traverse the membrane as a helical segment. The Extracellular portion of the chain corresponds to 419 to 421 (ESL). Residues 422–442 (VAITGAYAGTGIQYVIPAFLV) traverse the membrane as a helical segment. Residues 443–470 (YLCRKDTQLTFGYGTVNKHRSPFRHTFW) lie on the Cytoplasmic side of the membrane. Residues 471-491 (VAFVLLWAFSCFFFVTAYIVL) traverse the membrane as a helical segment. Residues 492–496 (KETQL) are Extracellular-facing.

The protein belongs to the TMEM104 family.

Its subcellular location is the membrane. In Mus musculus (Mouse), this protein is Transmembrane protein 104 (Tmem104).